Reading from the N-terminus, the 260-residue chain is Neuraminyllactose-binding hemagglutinin (260 aa).

The N-terminal stretch at 1–27 (MRANNHFKDFAWKKCLLGASVVALLVG) is a signal peptide. Cys-28 carries N-palmitoyl cysteine lipidation. The S-diacylglycerol cysteine moiety is linked to residue Cys-28. Residues 134-139 (KRTIQK) are N-acetyl-neuraminyl-alpha(2,3)-lactose binding motif.

The protein localises to the cell outer membrane. This chain is Neuraminyllactose-binding hemagglutinin (hpaA), found in Helicobacter pylori (Campylobacter pylori).